The sequence spans 220 residues: Deoxyribose-phosphate aldolase (220 aa).

Asp-89 serves as the catalytic Proton donor/acceptor. Residue Lys-151 is the Schiff-base intermediate with acetaldehyde of the active site. The Proton donor/acceptor role is filled by Lys-180.

This sequence belongs to the DeoC/FbaB aldolase family. DeoC type 1 subfamily.

It localises to the cytoplasm. The enzyme catalyses 2-deoxy-D-ribose 5-phosphate = D-glyceraldehyde 3-phosphate + acetaldehyde. The protein operates within carbohydrate degradation; 2-deoxy-D-ribose 1-phosphate degradation; D-glyceraldehyde 3-phosphate and acetaldehyde from 2-deoxy-alpha-D-ribose 1-phosphate: step 2/2. Functionally, catalyzes a reversible aldol reaction between acetaldehyde and D-glyceraldehyde 3-phosphate to generate 2-deoxy-D-ribose 5-phosphate. This chain is Deoxyribose-phosphate aldolase, found in Streptococcus pneumoniae (strain Hungary19A-6).